The sequence spans 301 residues: Pantothenate synthetase (301 aa).

30–37 (MGNLHEGH) provides a ligand contact to ATP. Histidine 37 functions as the Proton donor in the catalytic mechanism. (R)-pantoate is bound at residue glutamine 61. Glutamine 61 is a beta-alanine binding site. 149-152 (GEKD) serves as a coordination point for ATP. Glutamine 155 provides a ligand contact to (R)-pantoate. ATP is bound by residues valine 178 and 186-189 (MSSR).

The protein belongs to the pantothenate synthetase family. As to quaternary structure, homodimer.

The protein localises to the cytoplasm. It carries out the reaction (R)-pantoate + beta-alanine + ATP = (R)-pantothenate + AMP + diphosphate + H(+). It functions in the pathway cofactor biosynthesis; (R)-pantothenate biosynthesis; (R)-pantothenate from (R)-pantoate and beta-alanine: step 1/1. Its function is as follows. Catalyzes the condensation of pantoate with beta-alanine in an ATP-dependent reaction via a pantoyl-adenylate intermediate. In Vibrio vulnificus (strain YJ016), this protein is Pantothenate synthetase.